A 284-amino-acid polypeptide reads, in one-letter code: Nucleotide-binding protein Shewmr4_0670 (284 aa).

8-15 (GRSGSGKS) is a binding site for ATP. 56–59 (DVRN) contacts GTP.

Belongs to the RapZ-like family.

Displays ATPase and GTPase activities. In Shewanella sp. (strain MR-4), this protein is Nucleotide-binding protein Shewmr4_0670.